We begin with the raw amino-acid sequence, 383 residues long: METVVVIVGAGPAGLATSVCLNQHSIPNVILEKEDIYASLWKKRAYDRLKLHLAKEFCQLPFMPHGREVPTFMSKELFVNYLDAYVARFDINPRYNRTVKSSTFDESNNKWRVVAENTVTGETEVYWSEFLVVATGENGDGNIPMVEGIDTFGGEIMHSSEYKSGRDFKDKNVLVVGGGNSGMEISFDLCNFGANTTILIRTPRHVVTKEVIHLGMTLLKYAPVAMVDTLVTTMAKILYGDLSKYGLFRPKQGPFATKLFTGKAPVIDVGTVEKIRDGEIQVINGGIGSINGKTLTFENGHKQDFDAIVFATGYKSSVCNWLEDYEYVMKKDGFPKAPMPKHWKGEKNLYCAGFSRKGIAGGAEDAMSVADDIRSILATLKNN.

9-14 lines the FAD pocket; the sequence is GAGPAG. Residue 177-182 participates in NADP(+) binding; sequence GGGNSG.

This sequence belongs to the FMO family. It depends on FAD as a cofactor.

The enzyme catalyses indole-3-pyruvate + NADPH + O2 + H(+) = (indol-3-yl)acetate + CO2 + NADP(+) + H2O. It functions in the pathway plant hormone metabolism; auxin biosynthesis. Involved in auxin biosynthesis. The chain is Probable indole-3-pyruvate monooxygenase YUCCA10 (YUC10) from Arabidopsis thaliana (Mouse-ear cress).